The following is a 160-amino-acid chain: Endoribonuclease YbeY (160 aa).

His125, His129, and His135 together coordinate Zn(2+).

It belongs to the endoribonuclease YbeY family. Requires Zn(2+) as cofactor.

Its subcellular location is the cytoplasm. Functionally, single strand-specific metallo-endoribonuclease involved in late-stage 70S ribosome quality control and in maturation of the 3' terminus of the 16S rRNA. This Leuconostoc citreum (strain KM20) protein is Endoribonuclease YbeY.